The following is a 423-amino-acid chain: Elongation factor 1-alpha (423 aa).

The region spanning 5-221 (KEHINVAFIG…DLLKPPEKLV (217 aa)) is the tr-type G domain. Residues 14 to 21 (GHVDHGKS) form a G1 region. GTP is bound at residue 14 to 21 (GHVDHGKS). Ser-21 provides a ligand contact to Mg(2+). The interval 70-74 (GVTID) is G2. Residues 91 to 94 (DCPG) are G3. GTP is bound by residues 91–95 (DCPGH) and 146–149 (NKMD). The G4 stretch occupies residues 146–149 (NKMD). The interval 185-187 (SAY) is G5.

Belongs to the TRAFAC class translation factor GTPase superfamily. Classic translation factor GTPase family. EF-Tu/EF-1A subfamily.

The protein localises to the cytoplasm. It carries out the reaction GTP + H2O = GDP + phosphate + H(+). Its function is as follows. GTP hydrolase that promotes the GTP-dependent binding of aminoacyl-tRNA to the A-site of ribosomes during protein biosynthesis. This Archaeoglobus fulgidus (strain ATCC 49558 / DSM 4304 / JCM 9628 / NBRC 100126 / VC-16) protein is Elongation factor 1-alpha.